We begin with the raw amino-acid sequence, 511 residues long: Arginine-containing cyclodipeptide synthase eshA (511 aa).

A Conserved DDXXE motif motif is present at residues 413–417 (DDSAE).

Belongs to the arginine-containing cyclodipeptide synthase family.

It carries out the reaction L-arginyl-tRNA(Arg) + L-leucyl-tRNA(Leu) = cyclo(L-arginyl-L-leucyl) + tRNA(Arg) + tRNA(Leu) + 2 H(+). The protein operates within secondary metabolite biosynthesis. Arginine-containing cyclodipeptide synthase; part of the cluster that mediates the biosynthesis of a highly modified cyclo-arginine-leucine dipeptide (cRW). Within the pathway, eshA acts as the scaffold-generating enzyme and is responsible for formation of the cyclo-Arg-Leu diketopiperazine (cRL) from L-arginyl-tRNA(Arg) + L-Leucyl-tRNA(Leu). Additional enzymes from the cluster then further modify the cyclo-Arg-Leu diketopiperazine (cRW) scaffold. This chain is Arginine-containing cyclodipeptide synthase eshA, found in Penicillium shearii (Eupenicillium shearii).